The primary structure comprises 178 residues: Ribosomal RNA small subunit methyltransferase G (178 aa).

S-adenosyl-L-methionine contacts are provided by residues G54, L59, 105–106 (LE), and R120.

The protein belongs to the methyltransferase superfamily. RNA methyltransferase RsmG family.

The protein localises to the cytoplasm. It carries out the reaction guanosine(527) in 16S rRNA + S-adenosyl-L-methionine = N(7)-methylguanosine(527) in 16S rRNA + S-adenosyl-L-homocysteine. Specifically methylates the N7 position of guanine in position 527 of 16S rRNA. In Helicobacter pylori (strain J99 / ATCC 700824) (Campylobacter pylori J99), this protein is Ribosomal RNA small subunit methyltransferase G.